Reading from the N-terminus, the 447-residue chain is MTKRKKRAAINLTRLPIEYIDWLSRPIYRFIHIESAAGIVLFISTLLAVLLANSHLSEEFARFWQISLGMTVGDLVFERSLHKWVNDAGMTLFFFLIALELKRELVLGELRNPQLALLSIAAALGGMSTPPLFYLLLQYGESGQHGWGTVMATDTAFVIGCLALLGRSIPSSLRIFMLSMAVVDDIGAIFVVAIGYGEAVDWLVLSYALLGFMLVRAMAFLGVRSLVLFSIVGGAIWLVIDMSGVHPTITGVILGLLTPTNKWMSRQHLFIIMEALVPSSPSQQWSGDKREGEILKTAAAAARETLSPVERLEMLLHPWVGFVVLPLFALANAGVSLTSVNLTSPITLAVFVGFVFGKPIGIVLFSWIAVWLGIAKLPENLNWGMVFGGGMLAGIGFTMALFISELAYNPDQINAAKLGIFIASITSALIGFLCLRYFAAREKQKRT.

Transmembrane regions (helical) follow at residues 30-50 (FIHIESAAGIVLFISTLLAVL), 81-101 (LHKWVNDAGMTLFFFLIALEL), 117-137 (LLSIAAALGGMSTPPLFYLLL), 146-166 (GWGTVMATDTAFVIGCLALLG), 175-195 (IFMLSMAVVDDIGAIFVVAIG), 199-219 (AVDWLVLSYALLGFMLVRAMA), 220-240 (FLGVRSLVLFSIVGGAIWLVI), 315-335 (LLHPWVGFVVLPLFALANAGV), 350-370 (VFVGFVFGKPIGIVLFSWIAV), 383-403 (WGMVFGGGMLAGIGFTMALFI), and 415-435 (AAKLGIFIASITSALIGFLCL).

Belongs to the NhaA Na(+)/H(+) (TC 2.A.33) antiporter family.

The protein resides in the cell inner membrane. It catalyses the reaction Na(+)(in) + 2 H(+)(out) = Na(+)(out) + 2 H(+)(in). Functionally, na(+)/H(+) antiporter that extrudes sodium in exchange for external protons. The protein is Na(+)/H(+) antiporter NhaA 2 of Vibrio vulnificus (strain CMCP6).